The primary structure comprises 231 residues: MLKRFFITGTDTSVGKTVVSRALLQALASQGKTVAGYKPVAKGSKETPEGLRNKDALVLQSVSTIELPYEAVNPIALSEEESSVAHSCPINYTLISNGLANLTEKVDHVVVEGTGGWRSLMNDLRPLSEWVVQEQLPVLMVVGIQEGCINHALLTAQAIANDGLPLIGWVANRINPGLAHYAEIIDVLGKKLPAPLIGELPYLPRAEQRELGQYIRLAMLRSVLAVDRVTV.

13–18 is an ATP binding site; that stretch reads SVGKTV. Residue T17 participates in Mg(2+) binding. The active site involves K38. ATP is bound by residues D55, 112 to 115, 172 to 173, 201 to 203, and Q208; these read EGTG, NR, and PYL. 2 residues coordinate Mg(2+): D55 and E112.

Belongs to the dethiobiotin synthetase family. In terms of assembly, homodimer. Mg(2+) serves as cofactor.

The protein resides in the cytoplasm. It catalyses the reaction (7R,8S)-7,8-diammoniononanoate + CO2 + ATP = (4R,5S)-dethiobiotin + ADP + phosphate + 3 H(+). Its pathway is cofactor biosynthesis; biotin biosynthesis; biotin from 7,8-diaminononanoate: step 1/2. In terms of biological role, catalyzes a mechanistically unusual reaction, the ATP-dependent insertion of CO2 between the N7 and N8 nitrogen atoms of 7,8-diaminopelargonic acid (DAPA, also called 7,8-diammoniononanoate) to form a ureido ring. In Escherichia coli O157:H7, this protein is ATP-dependent dethiobiotin synthetase BioD 2.